The chain runs to 388 residues: Chitinase 4 (388 aa).

Residues 22 to 375 (FKTCVYFSNW…KNFVDQLGGV (354 aa)) form the GH18 domain. Asparagine 30 and asparagine 82 each carry an N-linked (GlcNAc...) asparagine glycan. Residues 82 to 83 (NQ) and 109 to 112 (GGWG) each bind chitin. Residues asparagine 123 and asparagine 132 are each glycosylated (N-linked (GlcNAc...) asparagine). The active-site Proton donor is glutamate 151. Tyrosine 152 contributes to the chitin binding site. A glycan (N-linked (GlcNAc...) asparagine) is linked at asparagine 155. 208–211 (MCYD) is a binding site for chitin. Asparagine 237 carries an N-linked (GlcNAc...) asparagine glycan. Tryptophan 350 is a binding site for chitin.

Belongs to the glycosyl hydrolase 18 family. Chitinase class V subfamily.

It is found in the secreted. The catalysed reaction is Random endo-hydrolysis of N-acetyl-beta-D-glucosaminide (1-&gt;4)-beta-linkages in chitin and chitodextrins.. Its function is as follows. Chitinase involved in the remodeling of chitin in the fungal cell wall. Plays a role in sporulation. The chain is Chitinase 4 (CHT4) from Candida albicans (strain SC5314 / ATCC MYA-2876) (Yeast).